The primary structure comprises 89 residues: Cell division protein FtsL (89 aa).

Residues Met-1–Lys-22 lie on the Cytoplasmic side of the membrane. Residues Leu-23–Ile-40 form a helical membrane-spanning segment. The Periplasmic segment spans residues Thr-41–Gln-89.

It belongs to the FtsL family. In terms of assembly, part of a complex composed of FtsB, FtsL and FtsQ.

Its subcellular location is the cell inner membrane. Essential cell division protein. May link together the upstream cell division proteins, which are predominantly cytoplasmic, with the downstream cell division proteins, which are predominantly periplasmic. In Moranella endobia (strain PCIT), this protein is Cell division protein FtsL.